The chain runs to 313 residues: Aspartate carbamoyltransferase catalytic subunit (313 aa).

Residues Arg-55 and Thr-56 each coordinate carbamoyl phosphate. Lys-83 contacts L-aspartate. The carbamoyl phosphate site is built by Arg-105, His-138, and Gln-141. 2 residues coordinate L-aspartate: Arg-171 and Arg-225. 2 residues coordinate carbamoyl phosphate: Gly-266 and Pro-267.

This sequence belongs to the aspartate/ornithine carbamoyltransferase superfamily. ATCase family. Heterododecamer (2C3:3R2) of six catalytic PyrB chains organized as two trimers (C3), and six regulatory PyrI chains organized as three dimers (R2).

It carries out the reaction carbamoyl phosphate + L-aspartate = N-carbamoyl-L-aspartate + phosphate + H(+). It participates in pyrimidine metabolism; UMP biosynthesis via de novo pathway; (S)-dihydroorotate from bicarbonate: step 2/3. In terms of biological role, catalyzes the condensation of carbamoyl phosphate and aspartate to form carbamoyl aspartate and inorganic phosphate, the committed step in the de novo pyrimidine nucleotide biosynthesis pathway. The sequence is that of Aspartate carbamoyltransferase catalytic subunit from Corynebacterium diphtheriae (strain ATCC 700971 / NCTC 13129 / Biotype gravis).